A 373-amino-acid polypeptide reads, in one-letter code: Phosphoserine aminotransferase (373 aa).

L-glutamate is bound at residue Arg41. Pyridoxal 5'-phosphate-binding positions include 75-76, Trp101, Thr152, Asp172, and Gln195; that span reads GT. Lys196 carries the N6-(pyridoxal phosphate)lysine modification. 236–237 contacts pyridoxal 5'-phosphate; the sequence is NT.

This sequence belongs to the class-V pyridoxal-phosphate-dependent aminotransferase family. SerC subfamily. In terms of assembly, homodimer. The cofactor is pyridoxal 5'-phosphate.

The protein localises to the cytoplasm. It catalyses the reaction O-phospho-L-serine + 2-oxoglutarate = 3-phosphooxypyruvate + L-glutamate. The enzyme catalyses 4-(phosphooxy)-L-threonine + 2-oxoglutarate = (R)-3-hydroxy-2-oxo-4-phosphooxybutanoate + L-glutamate. The protein operates within amino-acid biosynthesis; L-serine biosynthesis; L-serine from 3-phospho-D-glycerate: step 2/3. Its function is as follows. Catalyzes the reversible conversion of 3-phosphohydroxypyruvate to phosphoserine and of 3-hydroxy-2-oxo-4-phosphonooxybutanoate to phosphohydroxythreonine. The polypeptide is Phosphoserine aminotransferase (Lactobacillus helveticus (strain DPC 4571)).